Consider the following 154-residue polypeptide: Large ribosomal subunit protein uL11 (154 aa).

It belongs to the universal ribosomal protein uL11 family. In terms of assembly, part of the ribosomal stalk of the 50S ribosomal subunit. Interacts with L10 and the large rRNA to form the base of the stalk. L10 forms an elongated spine to which L12 dimers bind in a sequential fashion forming a multimeric L10(L12)X complex. In terms of processing, one or more lysine residues are methylated.

Its function is as follows. Forms part of the ribosomal stalk which helps the ribosome interact with GTP-bound translation factors. The protein is Large ribosomal subunit protein uL11 of Leuconostoc mesenteroides subsp. mesenteroides (strain ATCC 8293 / DSM 20343 / BCRC 11652 / CCM 1803 / JCM 6124 / NCDO 523 / NBRC 100496 / NCIMB 8023 / NCTC 12954 / NRRL B-1118 / 37Y).